Reading from the N-terminus, the 1075-residue chain is Carbamoyl phosphate synthase large chain (1075 aa).

The segment at 1–403 (MPKRTDINTI…SLQKALRGLE (403 aa)) is carboxyphosphate synthetic domain. ATP contacts are provided by arginine 129, arginine 169, glycine 175, glycine 176, glutamine 208, valine 210, glutamate 215, glycine 241, valine 242, histidine 243, glutamine 285, and glutamate 299. The 196-residue stretch at 133 to 328 (KDAMTKIGLN…IAKVAAKLAV (196 aa)) folds into the ATP-grasp 1 domain. Mg(2+) contacts are provided by glutamine 285, glutamate 299, and asparagine 301. Residues glutamine 285, glutamate 299, and asparagine 301 each contribute to the Mn(2+) site. Residues 404–548 (IGICGFNLRS…YSTYEDECEA (145 aa)) form an oligomerization domain region. The carbamoyl phosphate synthetic domain stretch occupies residues 549 to 930 (KPTTRQKVMI…AYYKAQLGAG (382 aa)). The 192-residue stretch at 673–864 (QKILTDLGLK…LAKIAALVMA (192 aa)) folds into the ATP-grasp 2 domain. Arginine 709, histidine 748, leucine 750, glutamate 755, glycine 780, isoleucine 781, histidine 782, serine 783, glutamine 823, and glutamate 835 together coordinate ATP. Residues glutamine 823, glutamate 835, and asparagine 837 each contribute to the Mg(2+) site. The Mn(2+) site is built by glutamine 823, glutamate 835, and asparagine 837. The region spanning 931-1070 (ERIPSTGKVF…QQLHLSSALA (140 aa)) is the MGS-like domain. An allosteric domain region spans residues 931-1075 (ERIPSTGKVF…SSALANQITR (145 aa)).

This sequence belongs to the CarB family. As to quaternary structure, composed of two chains; the small (or glutamine) chain promotes the hydrolysis of glutamine to ammonia, which is used by the large (or ammonia) chain to synthesize carbamoyl phosphate. Tetramer of heterodimers (alpha,beta)4. Requires Mg(2+) as cofactor. It depends on Mn(2+) as a cofactor.

It catalyses the reaction hydrogencarbonate + L-glutamine + 2 ATP + H2O = carbamoyl phosphate + L-glutamate + 2 ADP + phosphate + 2 H(+). It carries out the reaction hydrogencarbonate + NH4(+) + 2 ATP = carbamoyl phosphate + 2 ADP + phosphate + 2 H(+). The protein operates within amino-acid biosynthesis; L-arginine biosynthesis; carbamoyl phosphate from bicarbonate: step 1/1. Its pathway is pyrimidine metabolism; UMP biosynthesis via de novo pathway; (S)-dihydroorotate from bicarbonate: step 1/3. Its function is as follows. Large subunit of the glutamine-dependent carbamoyl phosphate synthetase (CPSase). CPSase catalyzes the formation of carbamoyl phosphate from the ammonia moiety of glutamine, carbonate, and phosphate donated by ATP, constituting the first step of 2 biosynthetic pathways, one leading to arginine and/or urea and the other to pyrimidine nucleotides. The large subunit (synthetase) binds the substrates ammonia (free or transferred from glutamine from the small subunit), hydrogencarbonate and ATP and carries out an ATP-coupled ligase reaction, activating hydrogencarbonate by forming carboxy phosphate which reacts with ammonia to form carbamoyl phosphate. The protein is Carbamoyl phosphate synthase large chain of Haemophilus ducreyi (strain 35000HP / ATCC 700724).